The sequence spans 273 residues: NADPH-dependent 7-cyano-7-deazaguanine reductase (273 aa).

A substrate-binding site is contributed by 81-83; sequence VES. 83–84 is an NADPH binding site; that stretch reads SK. Residue Cys179 is the Thioimide intermediate of the active site. Asp186 functions as the Proton donor in the catalytic mechanism. A substrate-binding site is contributed by 218–219; that stretch reads AE. 247 to 248 lines the NADPH pocket; that stretch reads RG.

This sequence belongs to the GTP cyclohydrolase I family. QueF type 2 subfamily. Homodimer.

It is found in the cytoplasm. The enzyme catalyses 7-aminomethyl-7-carbaguanine + 2 NADP(+) = 7-cyano-7-deazaguanine + 2 NADPH + 3 H(+). It participates in tRNA modification; tRNA-queuosine biosynthesis. Its function is as follows. Catalyzes the NADPH-dependent reduction of 7-cyano-7-deazaguanine (preQ0) to 7-aminomethyl-7-deazaguanine (preQ1). This chain is NADPH-dependent 7-cyano-7-deazaguanine reductase, found in Rickettsia massiliae (strain Mtu5).